A 321-amino-acid polypeptide reads, in one-letter code: MQELDLIIVGAGPVGLYAAFYAGMRGLSVAIIESAQVPGGQPQNLYPEKLIYDIAGLPAVTGADLTKNLLEQLAQISHRLFLGESVQKIEKEEGIFSVTTDKSTRRAKGVLLTTGAGLLKPRKLGIDNEETLANEGKISYFITSLKEFEGKNVAVFGGGDSALDWSLMLEKVAKNVHLVHRRTAFRGHEITVDRVMNSNVQVHTPYTFSNLIENELELKKIKSEESLNFSIDKILVNYGFLTNQVTLAENLEVSRNGRVKADSMMQSNIEGLYVAGDASDYPGKMPLMSVGFGEAVHAINAMTKKLEFDHPLRGGHSSSIF.

7 residues coordinate FAD: E33, Q41, Y46, V86, L119, D277, and S318.

This sequence belongs to the ferredoxin--NADP reductase type 2 family. In terms of assembly, homodimer. Requires FAD as cofactor.

The catalysed reaction is 2 reduced [2Fe-2S]-[ferredoxin] + NADP(+) + H(+) = 2 oxidized [2Fe-2S]-[ferredoxin] + NADPH. The protein is Ferredoxin--NADP reductase of Lactococcus lactis subsp. lactis (strain IL1403) (Streptococcus lactis).